A 942-amino-acid chain; its full sequence is Valine--tRNA ligase (942 aa).

The 'HIGH' region signature appears at 43–53 (PNVTGTLHMGH). Residues 551–555 (KMSKS) carry the 'KMSKS' region motif. Lysine 554 provides a ligand contact to ATP. A coiled-coil region spans residues 876 to 942 (EGLVDLDAER…AGLREQRAKL (67 aa)).

This sequence belongs to the class-I aminoacyl-tRNA synthetase family. ValS type 1 subfamily. Monomer.

Its subcellular location is the cytoplasm. It carries out the reaction tRNA(Val) + L-valine + ATP = L-valyl-tRNA(Val) + AMP + diphosphate. In terms of biological role, catalyzes the attachment of valine to tRNA(Val). As ValRS can inadvertently accommodate and process structurally similar amino acids such as threonine, to avoid such errors, it has a 'posttransfer' editing activity that hydrolyzes mischarged Thr-tRNA(Val) in a tRNA-dependent manner. This chain is Valine--tRNA ligase, found in Stenotrophomonas maltophilia (strain K279a).